A 762-amino-acid polypeptide reads, in one-letter code: Mitochondrial intermediate peptidase (762 aa).

Residues 1 to 28 (MQVRTLLTLGKKKVIGNRQCILSLYRKY) constitute a mitochondrion transit peptide. H544 lines the Zn(2+) pocket. E545 is a catalytic residue. Residues H548 and H551 each coordinate Zn(2+).

Belongs to the peptidase M3 family. Zn(2+) serves as cofactor.

It localises to the mitochondrion matrix. The enzyme catalyses Release of an N-terminal octapeptide as second stage of processing of some proteins imported into the mitochondrion.. Functionally, cleaves proteins, imported into the mitochondrion, to their mature size. While most mitochondrial precursor proteins are processed to the mature form in one step by mitochondrial processing peptidase (MPP), the sequential cleavage by MIP of an octapeptide after initial processing by MPP is a required step for a subgroup of nuclear-encoded precursor proteins destined for the matrix or the inner membrane. This Schizosaccharomyces pombe (strain 972 / ATCC 24843) (Fission yeast) protein is Mitochondrial intermediate peptidase (oct1).